The primary structure comprises 680 residues: WD repeat-containing protein 48 homolog (680 aa).

WD repeat units lie at residues 26-65 (QHRNGVNALQLDANNGKLYSAGRDAIIRVWNTRTDSSEKY), 71-110 (HHNDWVNDIVLCCNGRNLISASCDTTVKVWNAQKGFCMST), 113-152 (THRDYVQALAYAKDREQVASAGLDKAIFLWDVNTLTALTA), 164-203 (GSKDSIYSLAMNPSGTVIVSGSTENILRIWDPRTCMRSMK), 206-245 (GHTENVRCLVVSPDGNQVVSGSSDGTIKVWNLGQQRCVQT), 248-287 (VHKEGVWSLLMSENFQYIISGSRDRNIIVTEMRNPSNKTL), 290-329 (EEQAPVLSLGYNIDKTGVWATTWNSDIRCWKLPMYDRCTM), and 350-389 (KGGAAIKECAVLNDKRYIITKDSQDQVVVYDVLRVVKKEQ). Positions 592-616 (ETTPSGGNANNSLQNSQSDANSEGS) are disordered.

Belongs to the WD repeat WDR48 family. In terms of assembly, catalytic component of the Usp12-46 deubiquitylase complex consisting of Usp12-46, Wdr20 and Uaf1; regulatory subunit that, together wtih Wdr20, stabilizes Usp12-46. The Usp12-46 deubiquitylase complex associates with arr/arrow; the interaction leads to deubiquitination and stabilization of arr/arrow.

Its function is as follows. Regulatory component of the Usp12-46 deubiquitylase complex. activates deubiquitination by increasing the catalytic turnover without increasing the affinity of deubiquitinating enzymes for the substrate. The complex deubiquitylates the wg/wingless-signaling receptor arr/arrow, which stabilizes the receptor and increases its concentration at the cell surface; this enhances the sensitivity of cells to wg/wingless-signal stimulation. This increases the amplitude and spatial range of the signaling response to the wg/wingless morphogen gradient, facilitating the precise concentration-dependent regulation of its target genes. Together with Wdr20 and Usp12-46 required for wg/wingless-mediated signaling in the wing imaginal disc and for wg/wingless-dependent regulation of intestinal stem cell proliferation. The polypeptide is WD repeat-containing protein 48 homolog (Drosophila erecta (Fruit fly)).